We begin with the raw amino-acid sequence, 476 residues long: Probable serine carboxypeptidase CPVL (476 aa).

Positions 1–22 (MVGTMWKVIVSLVLLMPGSCDG) are cleaved as a signal peptide. Residues Asn81 and Asn132 are each glycosylated (N-linked (GlcNAc...) asparagine). Ser204 is a catalytic residue. N-linked (GlcNAc...) asparagine glycosylation is found at Asn307 and Asn346. Active-site residues include Asp388 and His448.

This sequence belongs to the peptidase S10 family.

May be involved in the digestion of phagocytosed particles in the lysosome, participation in an inflammatory protease cascade, and trimming of peptides for antigen presentation. In Pongo abelii (Sumatran orangutan), this protein is Probable serine carboxypeptidase CPVL (CPVL).